The chain runs to 839 residues: Putative AC9 transposase (839 aa).

Polar residues predominate over residues 32-43; that stretch reads SSSNANGTATDP. The interval 32–85 is disordered; it reads SSSNANGTATDPSQDDMAIVHEPQPQPQPQPEPQPQPQPEPEEEAPQKRAKKCT. The segment covering 55–70 has biased composition (pro residues); sequence QPQPQPQPEPQPQPQP.

The protein is Putative AC9 transposase of Zea mays (Maize).